Consider the following 343-residue polypeptide: MIVDHIGNLSDALKGKKSTFALVIGTTDVSLIPGITVAGATPELTMFTPAADAEYLITGSCKVIKGVPVTPDGIPTPALLSRASLSLINVNKLVVNAGARVTPKIPFVDLHGEPGRDIRKGGVRKEVAENIIANATVLGENLSEEVLVVGESIPAGTTTAAAVLTGLGFNGVEIVSSSSPNNPKELKRKVVEEAVRSAPRDTTERIYWLADPVILAVAGLAMGFRGLTILAGGTQMAAVSAVIKELSPEKLNSVGIITTKWIINDTTARLMELVKTLGVKLSHANLDLSQSQHEGLRVYERGFVKEGVGAGGAMALAMANGVTSENLVKKIDAFYSDLINAQR.

Belongs to the UPF0284 family.

The sequence is that of UPF0284 protein Msed_0735 from Metallosphaera sedula (strain ATCC 51363 / DSM 5348 / JCM 9185 / NBRC 15509 / TH2).